Reading from the N-terminus, the 211-residue chain is Large ribosomal subunit protein uL3 (211 aa).

Residues 130 to 154 form a disordered region; the sequence is RGPMAHGSKFHRHQGSNGSATTPGR.

This sequence belongs to the universal ribosomal protein uL3 family. In terms of assembly, part of the 50S ribosomal subunit. Forms a cluster with proteins L14 and L19.

In terms of biological role, one of the primary rRNA binding proteins, it binds directly near the 3'-end of the 23S rRNA, where it nucleates assembly of the 50S subunit. The polypeptide is Large ribosomal subunit protein uL3 (Lachnospira eligens (strain ATCC 27750 / DSM 3376 / VPI C15-48 / C15-B4) (Eubacterium eligens)).